We begin with the raw amino-acid sequence, 59 residues long: Small integral membrane protein 30 (59 aa).

Positions 1-24 (MNSVSTQLILVLASLLLILPVVEA) are cleaved as a signal peptide. Residues 25 to 29 (VEAGD) are Extracellular-facing. A helical membrane pass occupies residues 30-50 (AIALLLGVVLSITGICACLGI). Topologically, residues 51-59 (YARKRNGQM) are cytoplasmic.

As to quaternary structure, interacts (via transmembrane domain) with antiviral protein MAVS (via transmembrane domain); the interaction disrupts MAVS interaction with RIGI and inhibits MAVS aggregation, resulting in the repression of type I interferon signaling and innate immune responses.

It localises to the endoplasmic reticulum membrane. The protein localises to the mitochondrion membrane. Negatively regulates antiviral innate immune responses. Disrupts the interaction of antiviral protein MAVS with innate immune receptor RIGI and inhibits MAVS aggregation, resulting in the repression of type I interferon signaling and innate immune responses. The polypeptide is Small integral membrane protein 30 (Mus musculus (Mouse)).